An 89-amino-acid polypeptide reads, in one-letter code: Small ribosomal subunit protein uS15 (89 aa).

This sequence belongs to the universal ribosomal protein uS15 family. In terms of assembly, part of the 30S ribosomal subunit. Forms a bridge to the 50S subunit in the 70S ribosome, contacting the 23S rRNA.

Functionally, one of the primary rRNA binding proteins, it binds directly to 16S rRNA where it helps nucleate assembly of the platform of the 30S subunit by binding and bridging several RNA helices of the 16S rRNA. In terms of biological role, forms an intersubunit bridge (bridge B4) with the 23S rRNA of the 50S subunit in the ribosome. This is Small ribosomal subunit protein uS15 from Neisseria gonorrhoeae (strain ATCC 700825 / FA 1090).